A 286-amino-acid polypeptide reads, in one-letter code: Thymidylate synthase (286 aa).

Residues R21 and 136 to 137 each bind dUMP; that span reads RR. C156 functions as the Nucleophile in the catalytic mechanism. Residues 176–179, N187, and 217–219 each bind dUMP; these read RSVD and HIY. D179 is a binding site for (6R)-5,10-methylene-5,6,7,8-tetrahydrofolate. (6R)-5,10-methylene-5,6,7,8-tetrahydrofolate is bound at residue A285.

Belongs to the thymidylate synthase family. As to quaternary structure, homodimer.

It catalyses the reaction dUMP + (6R)-5,10-methylene-5,6,7,8-tetrahydrofolate = 7,8-dihydrofolate + dTMP. It functions in the pathway pyrimidine metabolism; dTTP biosynthesis. This chain is Thymidylate synthase (TD), found in Enterobacteria phage T4 (Bacteriophage T4).